The following is a 176-amino-acid chain: Inner membrane-spanning protein YciB (176 aa).

6 consecutive transmembrane segments (helical) span residues 3–23, 24–44, 49–69, 72–92, 121–141, and 149–169; these read FLFDLFPIILFFVAFKVWGIF, TATAVAIVATLAQVAWVAFRH, TMLWVSLGVIVVFGGATLVLH, KFIQWKPTVLYWLFAIGLLAA, VAWALFFAVLGVANLYVVHNF, and FKLFGTTGAMVVFIILQSLWL.

The protein belongs to the YciB family.

The protein localises to the cell inner membrane. Functionally, plays a role in cell envelope biogenesis, maintenance of cell envelope integrity and membrane homeostasis. In Burkholderia orbicola (strain MC0-3), this protein is Inner membrane-spanning protein YciB.